The sequence spans 234 residues: O-antigen biosynthesis glycosyltransferase WbnI (234 aa).

Substrate-binding positions include 8–13, 93–95, and 115–118; these read ICTGEY, NAV, and HPGY. Glu185 functions as the Nucleophile in the catalytic mechanism.

The protein belongs to the glycosyltransferase 6 family. It depends on Mn(2+) as a cofactor.

It catalyses the reaction alpha-L-Fuc-(1-&gt;2)-beta-D-Gal-(1-&gt;3)-alpha-D-GalNAc-(1-&gt;3)-alpha-D-GalNAc-di-trans,octa-cis-undecaprenyl diphosphate + UDP-alpha-D-galactose = alpha-L-Fuc-(1-&gt;2)-[alpha-D-Gal-(1-&gt;3)]-beta-D-Gal-(1-&gt;3)-alpha-D-GalNAc-(1-&gt;3)-alpha-D-GalNAc-di-trans,octa-cis-undecaprenyl diphosphate + UDP + H(+). Its pathway is bacterial outer membrane biogenesis; LPS O-antigen biosynthesis. Its function is as follows. Involved in the assembly of the O-repeating unit during O-antigen biosynthesis. This chain is O-antigen biosynthesis glycosyltransferase WbnI, found in Escherichia coli.